The chain runs to 156 residues: Small ribosomal subunit protein uS7 (156 aa).

This sequence belongs to the universal ribosomal protein uS7 family. As to quaternary structure, part of the 30S ribosomal subunit. Contacts proteins S9 and S11.

Its function is as follows. One of the primary rRNA binding proteins, it binds directly to 16S rRNA where it nucleates assembly of the head domain of the 30S subunit. Is located at the subunit interface close to the decoding center, probably blocks exit of the E-site tRNA. This chain is Small ribosomal subunit protein uS7, found in Clostridium beijerinckii (strain ATCC 51743 / NCIMB 8052) (Clostridium acetobutylicum).